A 368-amino-acid polypeptide reads, in one-letter code: tRNA-specific 2-thiouridylase MnmA (368 aa).

ATP is bound by residues glycine 11 to serine 18 and methionine 37. The interval asparagine 97–aspartate 99 is interaction with target base in tRNA. Cysteine 102 functions as the Nucleophile in the catalytic mechanism. A disulfide bridge links cysteine 102 with cysteine 199. Position 127 (glycine 127) interacts with ATP. The segment at lysine 149–glutamine 151 is interaction with tRNA. The active-site Cysteine persulfide intermediate is the cysteine 199. Residues arginine 311–tyrosine 312 form an interaction with tRNA region.

This sequence belongs to the MnmA/TRMU family. In terms of assembly, interacts with TusE.

It is found in the cytoplasm. It carries out the reaction S-sulfanyl-L-cysteinyl-[protein] + uridine(34) in tRNA + AH2 + ATP = 2-thiouridine(34) in tRNA + L-cysteinyl-[protein] + A + AMP + diphosphate + H(+). Catalyzes the 2-thiolation of uridine at the wobble position (U34) of tRNA(Lys), tRNA(Glu) and tRNA(Gln), leading to the formation of s(2)U34, the first step of tRNA-mnm(5)s(2)U34 synthesis. Sulfur is provided by IscS, via a sulfur-relay system. Binds ATP and its substrate tRNAs. The polypeptide is tRNA-specific 2-thiouridylase MnmA (Escherichia coli O6:H1 (strain CFT073 / ATCC 700928 / UPEC)).